The chain runs to 411 residues: Argininosuccinate synthase (411 aa).

ATP is bound by residues 15–23 (AYSGGLDTS) and A42. Residues Y93 and S98 each coordinate L-citrulline. Residue G123 participates in ATP binding. L-aspartate-binding residues include T125, N129, and D130. N129 provides a ligand contact to L-citrulline. L-citrulline is bound by residues R133, S185, S194, E270, and Y282.

It belongs to the argininosuccinate synthase family. Type 1 subfamily. Homotetramer.

The protein resides in the cytoplasm. It catalyses the reaction L-citrulline + L-aspartate + ATP = 2-(N(omega)-L-arginino)succinate + AMP + diphosphate + H(+). It participates in amino-acid biosynthesis; L-arginine biosynthesis; L-arginine from L-ornithine and carbamoyl phosphate: step 2/3. In Psychrobacter sp. (strain PRwf-1), this protein is Argininosuccinate synthase.